The following is a 761-amino-acid chain: Phosphoribosylformylglycinamidine synthase subunit PurL (761 aa).

Histidine 49 is an active-site residue. ATP-binding residues include tyrosine 52 and lysine 92. Glutamate 94 provides a ligand contact to Mg(2+). Substrate contacts are provided by residues 95–98 (SHNH) and arginine 117. Histidine 96 acts as the Proton acceptor in catalysis. Residue aspartate 118 participates in Mg(2+) binding. Glutamine 241 contacts substrate. Aspartate 269 is a binding site for Mg(2+). 318–320 (ESQ) contacts substrate. Positions 502 and 539 each coordinate ATP. Asparagine 540 lines the Mg(2+) pocket. Residue serine 542 coordinates substrate.

This sequence belongs to the FGAMS family. Monomer. Part of the FGAM synthase complex composed of 1 PurL, 1 PurQ and 2 PurS subunits.

The protein localises to the cytoplasm. The enzyme catalyses N(2)-formyl-N(1)-(5-phospho-beta-D-ribosyl)glycinamide + L-glutamine + ATP + H2O = 2-formamido-N(1)-(5-O-phospho-beta-D-ribosyl)acetamidine + L-glutamate + ADP + phosphate + H(+). Its pathway is purine metabolism; IMP biosynthesis via de novo pathway; 5-amino-1-(5-phospho-D-ribosyl)imidazole from N(2)-formyl-N(1)-(5-phospho-D-ribosyl)glycinamide: step 1/2. Its function is as follows. Part of the phosphoribosylformylglycinamidine synthase complex involved in the purines biosynthetic pathway. Catalyzes the ATP-dependent conversion of formylglycinamide ribonucleotide (FGAR) and glutamine to yield formylglycinamidine ribonucleotide (FGAM) and glutamate. The FGAM synthase complex is composed of three subunits. PurQ produces an ammonia molecule by converting glutamine to glutamate. PurL transfers the ammonia molecule to FGAR to form FGAM in an ATP-dependent manner. PurS interacts with PurQ and PurL and is thought to assist in the transfer of the ammonia molecule from PurQ to PurL. This Chlorobium chlorochromatii (strain CaD3) protein is Phosphoribosylformylglycinamidine synthase subunit PurL.